The primary structure comprises 1300 residues: CRISPR-associated endonuclease Cas12a (1300 aa).

Residues 1 to 24 (MSIYQEFVNKYSLSKTLRFELIPQ) are wedge region 1. Recognition domain regions lie at residues 25–339 (GKTL…SFVI) and 340–591 (DKLE…QKPY). Binds crRNA alone and in crRNA-target DNA heteroduplex regions lie at residues 47-51 (YKKAK) and 182-186 (FHENR). Residues 301–305 (NEYIN) form a binds DNA in crRNA-target DNA heteroduplex region. Binds crRNA in crRNA-target DNA heteroduplex stretches follow at residues 326 to 329 (KQIL) and 538 to 541 (HKLK). Residues 591–595 (YSDEK) are binds crRNA. Positions 592 to 662 (SDEKFKLNFE…GYKKIVYKLL (71 aa)) are wedge region 2. The tract at residues 662–679 (LPGANKMLPKVFFSAKSI) is LKL, important for PAM recognition and DNA unwinding. The interval 663 to 762 (PGANKMLPKV…FYREVENQGY (100 aa)) is PAM-interacting domain (PI). The segment at 671–677 (KVFFSAK) is binds DNA protospacer adjacent motif (PAM) on target DNA. Positions 692-704 (RNHSTHTKNGSPQ) are binds single-strand non-target DNA. Residues 763–892 (KLTFENISES…PITINFKSSG (130 aa)) form a wedge region 3 region. Binds crRNA stretches follow at residues 791 to 794 (KDFS) and 803 to 804 (LH). Catalysis depends on for pre-crRNA processing residues His843, Lys852, and Lys869. Binds crRNA regions lie at residues 851–853 (NKN) and 865–873 (YDLIKDKRF). The segment at 893-953 (ANKFNDEINL…IGNDRMKTNY (61 aa)) is ruvC-I. The For DNase activity of RuvC domain role is filled by Asp917. The segment at 954 to 971 (HDKLAAIEKDRDSARKDW) is bridge helix. The segment at 972 to 1078 (KKINNIKEMK…KQTGIIYYVP (107 aa)) is ruvC-II. Glu1006 (for DNase activity of RuvC domain) is an active-site residue. The nuclease domain stretch occupies residues 1079–1254 (AGFTSKICPV…QAPKNMPQDA (176 aa)). Asp1255 functions as the For DNase activity of RuvC domain in the catalytic mechanism. A ruvC-III region spans residues 1255–1300 (DANGAYHIGLKGLMLLGRIKNNQEGKKLNLVIKNEEYFEFVQNRNN).

The protein belongs to the CRISPR-associated endonuclease Cas12a family. As to quaternary structure, might be a homodimer. Might be a monomer. The cofactor is Ca(2+). Mg(2+) serves as cofactor.

The catalysed reaction is Endonucleolytic cleavage to 5'-phosphodinucleotide and 5'-phosphooligonucleotide end-products.. The enzyme catalyses RNA = a 5'-hydroxy-ribonucleotide + n nucleoside-2',3'-cyclophosphates.. CRISPR (clustered regularly interspaced short palindromic repeat), is an adaptive immune system that provides protection against mobile genetic elements (viruses, transposable elements and conjugative plasmids). CRISPR clusters contain sequences complementary to antecedent mobile elements and target invading nucleic acids. CRISPR clusters are transcribed and processed into CRISPR RNA (crRNA). Has endonuclease activity on pre-crRNA and dsDNA, using different active sites. A single-RNA guided endonuclease that is also capable of guiding crRNA processing; correct processing of pre-crRNA requires only this protein and the CRISPR locus. pre-crRNA processing proceeds by an intramolecular nucleophilic attack on the scissile phosphate by the 2'-OH of the upstream ribonucleotide, the divalent cation (which is bound by the crRNA) is probably required for ordering the crRNA pseudoknot and/or increasing RNA binding. RNA mutagenesis studies show pre-crRNA cleavage is highly sequence- and structure-specific. Forms a complex with crRNA and complementary dsDNA, where the crRNA displaces the non-target DNA strand and directs endonucleolytic cleavage of both strands of the DNA. Cleavage results in staggered 5-base 5' overhangs 14-18 and 21-23 bases downstream of the PAM (protospacer adjacent motif) on the non-target and target strands respectively. Both target and non-target strand DNA are probably independently cleaved in the same active site. When this protein is expressed in E.coli it prevents plasmids homologous to the first CRISPR spacer from transforming, formally showing it is responsible for plasmid immunity. This is CRISPR-associated endonuclease Cas12a from Francisella tularensis subsp. novicida (strain U112).